The chain runs to 296 residues: Urease accessory protein UreD (296 aa).

It belongs to the UreD family. As to quaternary structure, ureD, UreF and UreG form a complex that acts as a GTP-hydrolysis-dependent molecular chaperone, activating the urease apoprotein by helping to assemble the nickel containing metallocenter of UreC. The UreE protein probably delivers the nickel.

It is found in the cytoplasm. Its function is as follows. Required for maturation of urease via the functional incorporation of the urease nickel metallocenter. This Nitrosococcus oceani (strain ATCC 19707 / BCRC 17464 / JCM 30415 / NCIMB 11848 / C-107) protein is Urease accessory protein UreD.